The sequence spans 167 residues: Ribonuclease P protein subunit p20 (167 aa).

The segment at 1–36 is disordered; it reads MMGSNYPEHGTKPRSAKYHKQQNHRVVRKQPPRPAV. The segment covering 12 to 31 has biased composition (basic residues); it reads KPRSAKYHKQQNHRVVRKQP.

Interacts with Smn.

The protein resides in the nucleus. Its subcellular location is the nucleolus. The protein localises to the cytoplasm. It localises to the cytoplasmic granule. Component of ribonuclease P, a protein complex that generates mature tRNA molecules by cleaving their 5'-ends. Also a component of RNase MRP complex, which cleaves pre-rRNA sequences. The chain is Ribonuclease P protein subunit p20 from Drosophila melanogaster (Fruit fly).